Here is a 231-residue protein sequence, read N- to C-terminus: Nucleoside diphosphate kinase II, chloroplastic (231 aa).

The transit peptide at 1 to 62 (MVGATVVSKW…RNSASRRRLR (62 aa)) directs the protein to the chloroplast. ATP-binding residues include K91, F139, R167, T173, R184, and N194. The Pros-phosphohistidine intermediate role is filled by H197.

Belongs to the NDK family. In terms of assembly, interacts with PHYA, MPK3 and MPK6. Requires Mg(2+) as cofactor. Autophosphorylated.

It localises to the plastid. The protein localises to the chloroplast. It carries out the reaction a 2'-deoxyribonucleoside 5'-diphosphate + ATP = a 2'-deoxyribonucleoside 5'-triphosphate + ADP. It catalyses the reaction a ribonucleoside 5'-diphosphate + ATP = a ribonucleoside 5'-triphosphate + ADP. In terms of biological role, major role in the synthesis of nucleoside triphosphates other than ATP. The ATP gamma phosphate is transferred to the NDP beta phosphate via a ping-pong mechanism, using a phosphorylated active-site intermediate. May activate MPK3 and MPK6. May be involved in the regulation of cellular redox state and hydrogen peroxide-mediated MAP kinase signaling. The polypeptide is Nucleoside diphosphate kinase II, chloroplastic (NDPK2) (Arabidopsis thaliana (Mouse-ear cress)).